The sequence spans 49 residues: MVKRKANHVIPGMNDASAQGKGAGYNEELSNEPLTEAQKQNNKKRKKNQ.

A disordered region spans residues 1 to 49 (MVKRKANHVIPGMNDASAQGKGAGYNEELSNEPLTEAQKQNNKKRKKNQ).

The protein belongs to the SspO family.

The protein resides in the spore core. The chain is Small, acid-soluble spore protein O from Anoxybacillus flavithermus (strain DSM 21510 / WK1).